The chain runs to 161 residues: Lipoprotein signal peptidase (161 aa).

Transmembrane regions (helical) follow at residues 9 to 29 (WLWL…LVVE), 64 to 84 (WQKY…ANVL), and 96 to 113 (MAYA…IDRA). Active-site residues include Asp120 and Asp138. The helical transmembrane segment at 133–153 (VFNIADVAIVMGAGLLILETF) threads the bilayer.

The protein belongs to the peptidase A8 family.

It is found in the cell inner membrane. It catalyses the reaction Release of signal peptides from bacterial membrane prolipoproteins. Hydrolyzes -Xaa-Yaa-Zaa-|-(S,diacylglyceryl)Cys-, in which Xaa is hydrophobic (preferably Leu), and Yaa (Ala or Ser) and Zaa (Gly or Ala) have small, neutral side chains.. It participates in protein modification; lipoprotein biosynthesis (signal peptide cleavage). Functionally, this protein specifically catalyzes the removal of signal peptides from prolipoproteins. The polypeptide is Lipoprotein signal peptidase (Haemophilus ducreyi (strain 35000HP / ATCC 700724)).